The following is a 338-amino-acid chain: Ketol-acid reductoisomerase (NADP(+)) (338 aa).

The region spanning 1–181 is the KARI N-terminal Rossmann domain; that stretch reads MKVFYDNDAD…GGTRAGVIET (181 aa). NADP(+)-binding positions include 24–27, Arg-47, Ser-50, Ser-52, and 82–85; these read YGSQ and DEGQ. His-107 is a catalytic residue. Gly-133 provides a ligand contact to NADP(+). Residues 182–327 enclose the KARI C-terminal knotted domain; that stretch reads SFREETETDL…SKLRSMMTWI (146 aa). Mg(2+) is bound by residues Asp-190, Glu-194, Glu-226, and Glu-230. Ser-251 is a substrate binding site.

Belongs to the ketol-acid reductoisomerase family. Requires Mg(2+) as cofactor.

The catalysed reaction is (2R)-2,3-dihydroxy-3-methylbutanoate + NADP(+) = (2S)-2-acetolactate + NADPH + H(+). It catalyses the reaction (2R,3R)-2,3-dihydroxy-3-methylpentanoate + NADP(+) = (S)-2-ethyl-2-hydroxy-3-oxobutanoate + NADPH + H(+). The protein operates within amino-acid biosynthesis; L-isoleucine biosynthesis; L-isoleucine from 2-oxobutanoate: step 2/4. It participates in amino-acid biosynthesis; L-valine biosynthesis; L-valine from pyruvate: step 2/4. In terms of biological role, involved in the biosynthesis of branched-chain amino acids (BCAA). Catalyzes an alkyl-migration followed by a ketol-acid reduction of (S)-2-acetolactate (S2AL) to yield (R)-2,3-dihydroxy-isovalerate. In the isomerase reaction, S2AL is rearranged via a Mg-dependent methyl migration to produce 3-hydroxy-3-methyl-2-ketobutyrate (HMKB). In the reductase reaction, this 2-ketoacid undergoes a metal-dependent reduction by NADPH to yield (R)-2,3-dihydroxy-isovalerate. This chain is Ketol-acid reductoisomerase (NADP(+)), found in Acidithiobacillus ferrooxidans (strain ATCC 23270 / DSM 14882 / CIP 104768 / NCIMB 8455) (Ferrobacillus ferrooxidans (strain ATCC 23270)).